A 283-amino-acid chain; its full sequence is Nucleotide-binding protein Hore_15880 (283 aa).

8 to 15 (GMSGAGKS) lines the ATP pocket. 57 to 60 (DIRG) serves as a coordination point for GTP.

The protein belongs to the RapZ-like family.

Functionally, displays ATPase and GTPase activities. This Halothermothrix orenii (strain H 168 / OCM 544 / DSM 9562) protein is Nucleotide-binding protein Hore_15880.